Here is a 288-residue protein sequence, read N- to C-terminus: Protein PXR1 (288 aa).

In terms of domain architecture, G-patch spans 25–72 (QSRFGHKHLMRFGWQPGQGLGTQPVQSMKTHIKVSIKDDNLGLGAKLK). The segment at 147–258 (SYSQMEKDSS…TSIPESVSTR (112 aa)) is disordered. Residues 157–166 (SDEESDDDED) show a composition bias toward acidic residues. 2 stretches are compositionally biased toward basic residues: residues 169–185 (KKHK…KKRK) and 195–214 (KKKK…KDKK). Residues 238–256 (RTASIESSTSATSIPESVS) are compositionally biased toward low complexity.

It belongs to the PINX1 family.

It is found in the nucleus. The protein localises to the nucleolus. In terms of biological role, involved in rRNA-processing at A0, A1 and A2 sites and negatively regulates telomerase. The protein is Protein PXR1 (PXR1) of Candida glabrata (strain ATCC 2001 / BCRC 20586 / JCM 3761 / NBRC 0622 / NRRL Y-65 / CBS 138) (Yeast).